The primary structure comprises 48 residues: Fimbrial assembly protein, serogroup E2 (48 aa).

The chain is Fimbrial assembly protein, serogroup E2 (fimB) from Dichelobacter nodosus (Bacteroides nodosus).